A 393-amino-acid polypeptide reads, in one-letter code: Carbamoyl phosphate synthase small chain (393 aa).

The CPSase stretch occupies residues 1 to 194 (MSKDTTTYQG…TYVIEAEGEE (194 aa)). 3 residues coordinate L-glutamine: S61, G245, and G247. The 196-residue stretch at 195–390 (RHTVVAYDLG…VELMDADAQK (196 aa)) folds into the Glutamine amidotransferase type-1 domain. The active-site Nucleophile is C273. F274, Q277, N315, G317, and F318 together coordinate L-glutamine. Catalysis depends on residues H363 and E365.

The protein belongs to the CarA family. In terms of assembly, composed of two chains; the small (or glutamine) chain promotes the hydrolysis of glutamine to ammonia, which is used by the large (or ammonia) chain to synthesize carbamoyl phosphate. Tetramer of heterodimers (alpha,beta)4.

The catalysed reaction is hydrogencarbonate + L-glutamine + 2 ATP + H2O = carbamoyl phosphate + L-glutamate + 2 ADP + phosphate + 2 H(+). It catalyses the reaction L-glutamine + H2O = L-glutamate + NH4(+). The protein operates within amino-acid biosynthesis; L-arginine biosynthesis; carbamoyl phosphate from bicarbonate: step 1/1. Its pathway is pyrimidine metabolism; UMP biosynthesis via de novo pathway; (S)-dihydroorotate from bicarbonate: step 1/3. Functionally, small subunit of the glutamine-dependent carbamoyl phosphate synthetase (CPSase). CPSase catalyzes the formation of carbamoyl phosphate from the ammonia moiety of glutamine, carbonate, and phosphate donated by ATP, constituting the first step of 2 biosynthetic pathways, one leading to arginine and/or urea and the other to pyrimidine nucleotides. The small subunit (glutamine amidotransferase) binds and cleaves glutamine to supply the large subunit with the substrate ammonia. The sequence is that of Carbamoyl phosphate synthase small chain from Corynebacterium glutamicum (strain ATCC 13032 / DSM 20300 / JCM 1318 / BCRC 11384 / CCUG 27702 / LMG 3730 / NBRC 12168 / NCIMB 10025 / NRRL B-2784 / 534).